A 354-amino-acid polypeptide reads, in one-letter code: UPF0597 protein PPA0217 (354 aa).

It belongs to the UPF0597 family.

The chain is UPF0597 protein PPA0217 from Cutibacterium acnes (strain DSM 16379 / KPA171202) (Propionibacterium acnes).